We begin with the raw amino-acid sequence, 160 residues long: Ribosome-binding factor A (160 aa).

The span at 112–122 (KARQSDEKVRE) shows a compositional bias: basic and acidic residues. Positions 112 to 160 (KARQSDEKVREASAGATYAGEADPYRKPDEDETDTEGAVEADETDDTAK) are disordered. Acidic residues predominate over residues 141–160 (EDETDTEGAVEADETDDTAK).

It belongs to the RbfA family. As to quaternary structure, monomer. Binds 30S ribosomal subunits, but not 50S ribosomal subunits or 70S ribosomes.

It localises to the cytoplasm. Functionally, one of several proteins that assist in the late maturation steps of the functional core of the 30S ribosomal subunit. Associates with free 30S ribosomal subunits (but not with 30S subunits that are part of 70S ribosomes or polysomes). Required for efficient processing of 16S rRNA. May interact with the 5'-terminal helix region of 16S rRNA. This is Ribosome-binding factor A from Streptomyces coelicolor (strain ATCC BAA-471 / A3(2) / M145).